Reading from the N-terminus, the 224-residue chain is Menaquinol:cytochrome c reductase cytochrome b subunit (224 aa).

The helical transmembrane segment at 37–57 (FSAFVYCFGGLTFFVTVIQIL) threads the bilayer. Position 42 (Tyr42) interacts with heme b. Cys43 provides a ligand contact to heme c. Heme b contacts are provided by Arg91, His94, His108, and Arg111. 3 consecutive transmembrane segments (helical) span residues 96-116 (WGASLVIVMMFLHTLRVFFQG), 126-146 (WIVGVLIFMVMMGLGFTGYLL), and 195-215 (IHVFFLPAALLGLMAAHFLMI). Positions 196 and 211 each coordinate heme b. Residues Arg216 and Ile220 each contribute to the heme c site. Ser221 is a heme b binding site.

This sequence belongs to the cytochrome b family. In terms of assembly, the main subunits of the menaquinol:cytochrome c complex are a Rieske-type iron-sulfur protein (QcrA), a cytochrome b (QcrB) and a cytochrome c (QcrC). It depends on heme b as a cofactor. Requires heme c as cofactor.

It localises to the cell membrane. Component of the menaquinol:cytochrome c reductase complex. This is Menaquinol:cytochrome c reductase cytochrome b subunit (qcrB) from Geobacillus thermodenitrificans.